We begin with the raw amino-acid sequence, 448 residues long: Probable glycine dehydrogenase (decarboxylating) subunit 1 (448 aa).

This sequence belongs to the GcvP family. N-terminal subunit subfamily. As to quaternary structure, the glycine cleavage system is composed of four proteins: P, T, L and H. In this organism, the P 'protein' is a heterodimer of two subunits.

It carries out the reaction N(6)-[(R)-lipoyl]-L-lysyl-[glycine-cleavage complex H protein] + glycine + H(+) = N(6)-[(R)-S(8)-aminomethyldihydrolipoyl]-L-lysyl-[glycine-cleavage complex H protein] + CO2. Functionally, the glycine cleavage system catalyzes the degradation of glycine. The P protein binds the alpha-amino group of glycine through its pyridoxal phosphate cofactor; CO(2) is released and the remaining methylamine moiety is then transferred to the lipoamide cofactor of the H protein. This chain is Probable glycine dehydrogenase (decarboxylating) subunit 1, found in Staphylococcus aureus (strain Mu3 / ATCC 700698).